We begin with the raw amino-acid sequence, 219 residues long: uncharacterized protein (219 aa).

Over residues 139–154 (PRKIKQKKKTKKKRPS) the composition is skewed to basic residues. The tract at residues 139–160 (PRKIKQKKKTKKKRPSKSAPKT) is disordered. In terms of domain architecture, LysM spans 159 to 217 (KTYTVKKGDTLWDLAGKFYGDSTKWRKIWKVNKKAMIKRSKRNIRQPGHWIFPGQKLKI).

This is an uncharacterized protein from Bacillus subtilis (strain 168).